The primary structure comprises 301 residues: MNKFDSKTFQGLILSLQDYWARQGCVIIQPLDMEVGAGTFHPMTFLRSIGPEPISSAYVQPCRRPTDGRYGENPNRLQHYYQFQVMLKPSPSNIQELYLGSLKELGFDPLVHDIRFVEDNWESPTLGAWGLGWEVWLNGMEVTQFTYFQQVGGIECSPVTGEITYGLERLAMYIQGVDSIYDLVWTDGPMGKVTYGDVFHQNEVEQSTYNFEYADVDALFGMFDHCEKESQKMIEAGLPLPAYEQVMKASHAFNLLDARHAISVTERQRYILRVRTLSKACAEAYYQAREKLGFPMCKKEA.

This sequence belongs to the class-II aminoacyl-tRNA synthetase family. Tetramer of two alpha and two beta subunits.

It localises to the cytoplasm. It catalyses the reaction tRNA(Gly) + glycine + ATP = glycyl-tRNA(Gly) + AMP + diphosphate. The protein is Glycine--tRNA ligase alpha subunit of Pseudoalteromonas atlantica (strain T6c / ATCC BAA-1087).